Consider the following 319-residue polypeptide: MARRPVLARHRIDFRNRVNYIGRFAPSPSGPLHAGSLVAALASWLDARAHHGLWRLRIEDVDTPRTVPGAAGVIMDQLRALHLHWDGEIMWQSRRGAAYQQAFDALAARGLIYGCGCTRREIADSALRGTAGVDGERPYPGTCREGLPAGRQARAWRVRVPPGVETFVDRWLGPQQQDVAAAVGDFALRRADGLWAYQLAVVVDDADQGVTDVVRGADLLGSTARQRVLGRLLGLAPPRVMHVPLIVDPATGLKLSKQNGAPALDCSQPLRMLQQAWSGLGFAPLAAATPEAFLQAAAAQWAQRFGMRHAAVPASPKAD.

L-glutamate is bound by residues 23 to 27 (RFAPS) and glutamate 59. Residues 26–36 (PSPSGPLHAGS) carry the 'HIGH' region motif. The Zn(2+) site is built by cysteine 115, cysteine 117, tyrosine 139, and cysteine 143. Residues tyrosine 197 and arginine 215 each coordinate L-glutamate. The 'KMSKS' region motif lies at 254–258 (KLSKQ). Lysine 257 is an ATP binding site.

The protein belongs to the class-I aminoacyl-tRNA synthetase family. GluQ subfamily. Zn(2+) serves as cofactor.

In terms of biological role, catalyzes the tRNA-independent activation of glutamate in presence of ATP and the subsequent transfer of glutamate onto a tRNA(Asp). Glutamate is transferred on the 2-amino-5-(4,5-dihydroxy-2-cyclopenten-1-yl) moiety of the queuosine in the wobble position of the QUC anticodon. In Bordetella bronchiseptica (strain ATCC BAA-588 / NCTC 13252 / RB50) (Alcaligenes bronchisepticus), this protein is Glutamyl-Q tRNA(Asp) synthetase.